A 380-amino-acid chain; its full sequence is MVHAPAKVAAAAAIPLLTPYKMGQLELSHRVVLAPLTRCRSYGNVPQPHAAVYYSQRATRGGLLIAEATDISPTAQGYPETPGIYTQQQIEAWKPIVDAVHRKGALFFLQIWHVGRVSTTDFQPNGQAPISSTDKQITPDDSGMVYSKPRRLRTDEIPQIIDDFRRAARNAIEAGFDGVEIHGAHGYLLEQFMKDSANDRTDEYGGSLENRCRFAVEVIDAVVAEVGAHRVGIRLSPFVDFMDCFDSDPVALGSYMVQQLNKHPGFLYCHMVEPRMAIIEGRRKIAHGLLPFRKQFNGTFIAAGGYDREEGNKVVADGYADLVAYGRLFLANPDLPRRFELDAPLNRYDRSTFYTQDPVVGYTDYPFLEEIDEESRTTYA.

FMN-binding positions include 35–37 (PLT), Ala-68, and Gln-110. 182-185 (HGAH) contributes to the substrate binding site. Tyr-187 serves as the catalytic Proton donor. Residue Arg-234 participates in FMN binding. Arg-275 serves as a coordination point for substrate. FMN is bound by residues Gly-305 and 326–327 (GR).

Belongs to the NADH:flavin oxidoreductase/NADH oxidase family. Requires FMN as cofactor.

It catalyses the reaction (1S,2S)-OPC-8 + NADP(+) = (9S,13S,15Z)-12-oxophyto-10,15-dienoate + NADPH + H(+). The protein operates within lipid metabolism; oxylipin biosynthesis. Functionally, probably involved in the biosynthesis or metabolism of oxylipin signaling molecules. In vitro, reduces cis(-)-12-oxophytodienoic acid (cis(-)-OPDA) and to cis(-)-OPC-8:0. This is 12-oxophytodienoate reductase 1 from Oryza sativa subsp. japonica (Rice).